Here is a 527-residue protein sequence, read N- to C-terminus: Amine oxidase [flavin-containing] A (527 aa).

Position 1 is an N-acetylmethionine (M1). Residues 1 to 497 (MERQEKANNA…RTFWERNLPS (497 aa)) lie on the Cytoplasmic side of the membrane. Residue S383 is modified to Phosphoserine. C406 is subject to S-8alpha-FAD cysteine. A helical; Anchor for type IV membrane protein membrane pass occupies residues 498-518 (VTGLLKIIGFSTSVTALWLAV). The Mitochondrial intermembrane portion of the chain corresponds to 519 to 527 (YKFRLLTRS). An interaction with membrane phospholipid headgroups region spans residues 520–522 (KFR).

It belongs to the flavin monoamine oxidase family. Monomer, homo- or heterodimer (containing two subunits of similar size). Each subunit contains a covalently bound flavin. Enzymatically active as monomer. It depends on FAD as a cofactor.

It is found in the mitochondrion outer membrane. The enzyme catalyses a secondary aliphatic amine + O2 + H2O = a primary amine + an aldehyde + H2O2. It carries out the reaction a primary methyl amine + O2 + H2O = an aldehyde + H2O2 + NH4(+). The catalysed reaction is (R)-adrenaline + O2 + H2O = (R)-3,4-dihydroxymandelaldehyde + methylamine + H2O2. It catalyses the reaction dopamine + O2 + H2O = 3,4-dihydroxyphenylacetaldehyde + H2O2 + NH4(+). The enzyme catalyses tyramine + O2 + H2O = (4-hydroxyphenyl)acetaldehyde + H2O2 + NH4(+). It carries out the reaction (R)-noradrenaline + O2 + H2O = (R)-3,4-dihydroxymandelaldehyde + H2O2 + NH4(+). The catalysed reaction is serotonin + O2 + H2O = (5-hydroxyindol-3-yl)acetaldehyde + H2O2 + NH4(+). It catalyses the reaction kynuramine + O2 + H2O = 3-(2-aminophenyl)-3-oxopropanal + H2O2 + NH4(+). The enzyme catalyses tryptamine + O2 + H2O = indole-3-acetaldehyde + H2O2 + NH4(+). It carries out the reaction 2-phenylethylamine + O2 + H2O = 2-phenylacetaldehyde + H2O2 + NH4(+). Its function is as follows. Catalyzes the oxidative deamination of primary and some secondary amine such as neurotransmitters, with concomitant reduction of oxygen to hydrogen peroxide and has important functions in the metabolism of neuroactive and vasoactive amines in the central nervous system and peripheral tissues. Preferentially oxidizes serotonin. Also catalyzes the oxidative deamination of kynuramine to 3-(2-aminophenyl)-3-oxopropanal that can spontaneously condense to 4-hydroxyquinoline. This Sus scrofa (Pig) protein is Amine oxidase [flavin-containing] A.